A 574-amino-acid polypeptide reads, in one-letter code: Ankyrin repeat protein B18 (574 aa).

ANK repeat units lie at residues 56-87 (TGYT…DVTM), 135-164 (IKSR…DPNF), 167-213 (DGYT…NLNA), 217-249 (CGNT…NFKI), 253-285 (HGLT…NVGE), and 327-356 (EGKT…DINA). Residues 541–574 (NCLLTLLPSEIIYEILYMLTINDLYNISYPPTKV) form the F-box domain.

This is Ankyrin repeat protein B18 from Vaccinia virus (strain Ankara) (VACV).